The sequence spans 51 residues: UPF0181 protein HAPS_0710 (51 aa).

The protein belongs to the UPF0181 family.

The chain is UPF0181 protein HAPS_0710 from Glaesserella parasuis serovar 5 (strain SH0165) (Haemophilus parasuis).